The primary structure comprises 78 residues: UPF0291 protein Ldb1355 (78 aa).

It belongs to the UPF0291 family.

Its subcellular location is the cytoplasm. The protein is UPF0291 protein Ldb1355 of Lactobacillus delbrueckii subsp. bulgaricus (strain ATCC 11842 / DSM 20081 / BCRC 10696 / JCM 1002 / NBRC 13953 / NCIMB 11778 / NCTC 12712 / WDCM 00102 / Lb 14).